We begin with the raw amino-acid sequence, 266 residues long: uncharacterized protein (266 aa).

Helical transmembrane passes span 9 to 29, 79 to 99, 122 to 142, and 193 to 213; these read IFII…IELP, GIMT…INPF, LSVM…MLSG, and GWYL…MVFI.

Its subcellular location is the membrane. This is an uncharacterized protein from Dictyostelium discoideum (Social amoeba).